The chain runs to 275 residues: Small ribosomal subunit protein uS3 (275 aa).

In terms of domain architecture, KH type-2 spans 39–107 (VRIYLKKKLK…PVHVNIEEIR (69 aa)). The interval 216-275 (AAATSAEPAAEEKKTRRAPSKTAARKPAAGTDKPLVAAKPAVKRVRKVETPAADTQKSGE) is disordered.

This sequence belongs to the universal ribosomal protein uS3 family. In terms of assembly, part of the 30S ribosomal subunit. Forms a tight complex with proteins S10 and S14.

Its function is as follows. Binds the lower part of the 30S subunit head. Binds mRNA in the 70S ribosome, positioning it for translation. The chain is Small ribosomal subunit protein uS3 from Polynucleobacter asymbioticus (strain DSM 18221 / CIP 109841 / QLW-P1DMWA-1) (Polynucleobacter necessarius subsp. asymbioticus).